Reading from the N-terminus, the 91-residue chain is Small ribosomal subunit protein uS19 (91 aa).

This sequence belongs to the universal ribosomal protein uS19 family.

Functionally, protein S19 forms a complex with S13 that binds strongly to the 16S ribosomal RNA. This Lachnospira eligens (strain ATCC 27750 / DSM 3376 / VPI C15-48 / C15-B4) (Eubacterium eligens) protein is Small ribosomal subunit protein uS19.